We begin with the raw amino-acid sequence, 1266 residues long: Rho GTPase-activating protein 29 (1266 aa).

A phosphoserine mark is found at serine 166, serine 171, serine 174, and serine 185. In terms of domain architecture, F-BAR spans 187–457 (IELDNLLLKN…SAKLYDPGQE (271 aa)). A coiled-coil region spans residues 291 to 413 (RKNEMEKQRK…EILTQLRTLV (123 aa)). Residues serine 496, serine 516, and serine 549 each carry the phosphoserine modification. Residues 538-556 (SESTGGSSESRSLDSESIS) are compositionally biased toward low complexity. The disordered stretch occupies residues 538–596 (SESTGGSSESRSLDSESISPGDFHRKLPRTPSSGTMSSADDLDEREPPSPSEAGPNSLG). The segment at 609-654 (THKFRKLRSPTKCRDCEGIVMFPGVECEECLLVCHRKCLENLVIVC) adopts a Phorbol-ester/DAG-type zinc-finger fold. Positions 668-883 (AEFIQVAKKE…FLITYAQKIF (216 aa)) constitute a Rho-GAP domain. 3 positions are modified to phosphoserine: serine 915, serine 951, and serine 1023. Disordered regions lie at residues 1033–1054 (AGSPTERSSRNTGNTDSDKFGK), 1114–1153 (VSTGNNRGHSSGAAQPSKAHADPARSARDTSEHSSSDSCP), and 1222–1248 (VQTSGQPKESSEEPGLPEGTPTCQRPR). A compositionally biased stretch (polar residues) spans 1115–1127 (STGNNRGHSSGAA). Residues 1132-1148 (AHADPARSARDTSEHSS) are compositionally biased toward basic and acidic residues. Residues serine 1149 and serine 1151 each carry the phosphoserine modification. Residues 1263-1266 (PQFV) form an interaction with PTPN13/PTPL1 region.

Interacts with PTPN13/PTPL1. Interacts with RAP2A via its coiled coil domain. Interacts with RASIP1.

GTPase activator for the Rho-type GTPases by converting them to an inactive GDP-bound state. Has strong activity toward RHOA, and weaker activity toward RAC1 and CDC42. May act as a specific effector of RAP2A to regulate Rho. In concert with RASIP1, suppresses RhoA signaling and dampens ROCK and MYH9 activities in endothelial cells and plays an essential role in blood vessel tubulogenesis. This chain is Rho GTPase-activating protein 29 (Arhgap29), found in Rattus norvegicus (Rat).